Here is a 166-residue protein sequence, read N- to C-terminus: Protein UTR5 (166 aa).

The sequence is that of Protein UTR5 (UTR5) from Saccharomyces cerevisiae (strain ATCC 204508 / S288c) (Baker's yeast).